Consider the following 129-residue polypeptide: Protein Turandot C (129 aa).

The N-terminal stretch at 1 to 21 (MNASISLLCLALLLISPFCLG) is a signal peptide.

This sequence belongs to the Turandot family.

Its subcellular location is the secreted. Its function is as follows. A humoral factor that may play a role in stress tolerance. In Drosophila melanogaster (Fruit fly), this protein is Protein Turandot C.